The sequence spans 336 residues: TBC1 domain family member 21 (336 aa).

The Rab-GAP TBC domain maps to 57–265 (GLHPFVRTEA…RLWEVLLTGK (209 aa)).

Interacts with ACTB. Interacts with ARMC12, TOMM20, DNAH7 and RAP1A. Interacts with RAB10. As to expression, expressed in round and elongated spermatids (at protein level). Expressed specifically in adult testis and very weakly in fetal brain.

Its subcellular location is the cytoplasmic vesicle. The protein resides in the secretory vesicle. It localises to the acrosome. It is found in the cytoplasm. The protein localises to the cytoskeleton. Its function is as follows. Acts as a GTPase-activating protein for Rab family protein(s). Essential for the establishment of male fertility, and is required for both the production of normal sperm number and sperm function. Plays an important role in the formation of intact mitochondria, outer dense fibers and axoneme within the sperm tail. Essential for sperm mitochondrial sheath formation and for the interactions of ARMC12 with VDAC2 and VDAC3. May be involved in acrosome formation and cytoskeletal reorganization during spermiogenesis, possibly by regulating RAB3A activity. The sequence is that of TBC1 domain family member 21 (TBC1D21) from Homo sapiens (Human).